The primary structure comprises 425 residues: Dihydroorotase (425 aa).

Positions 56 and 58 each coordinate Zn(2+). Substrate is bound by residues 58 to 60 and Asn-90; that span reads HYR. Residues Asp-148, His-175, and His-228 each contribute to the Zn(2+) site. Asn-274 is a substrate binding site. Asp-301 serves as a coordination point for Zn(2+). Asp-301 is a catalytic residue. Substrate-binding positions include His-305 and 319-320; that span reads FG.

It belongs to the metallo-dependent hydrolases superfamily. DHOase family. Class I DHOase subfamily. Zn(2+) is required as a cofactor.

It carries out the reaction (S)-dihydroorotate + H2O = N-carbamoyl-L-aspartate + H(+). Its pathway is pyrimidine metabolism; UMP biosynthesis via de novo pathway; (S)-dihydroorotate from bicarbonate: step 3/3. Catalyzes the reversible cyclization of carbamoyl aspartate to dihydroorotate. The polypeptide is Dihydroorotase (Lactobacillus gasseri (strain ATCC 33323 / DSM 20243 / BCRC 14619 / CIP 102991 / JCM 1131 / KCTC 3163 / NCIMB 11718 / NCTC 13722 / AM63)).